Here is a 557-residue protein sequence, read N- to C-terminus: Formate--tetrahydrofolate ligase 2 (557 aa).

66-73 is a binding site for ATP; it reads TPAGEGKT.

Belongs to the formate--tetrahydrofolate ligase family.

The enzyme catalyses (6S)-5,6,7,8-tetrahydrofolate + formate + ATP = (6R)-10-formyltetrahydrofolate + ADP + phosphate. Its pathway is one-carbon metabolism; tetrahydrofolate interconversion. The polypeptide is Formate--tetrahydrofolate ligase 2 (Streptococcus pyogenes serotype M3 (strain ATCC BAA-595 / MGAS315)).